Reading from the N-terminus, the 943-residue chain is MLKLLLGDPNTRKLKRYQPIVEEINFLEEEISKLTDDELRQETHNLKSQISSESDIKQQKELLDESLPKAFAIVREASKRVLDMRHFDVQLIGGMVLHECQIAEMKTGEGKTLVATLPCYLNALTGKGVHVVTVNDYLARRDAEWMGQVHRFLGLSVGLIQQDMSPVQRKKNYDCDITYATNSELGFDYLRDNMSTDINEVVQRPFNYCVIDEVDSILIDEARTPLIISGQVERPQEKYQKASELALALVKAKEIGKDGIDPEGDYEVDEKQRSCILTDQGFAKCEEYLAVSDLYNPKDPWAHYITNALKAKELFIKDVNYIIKNNEAVIVDEFTGRVMPGRRWSDGQHQAIEAKESLKIQPETQTLASITYQNFFLLYPGLAGMTGTAKTEEVEFEKTYKLESTVIPTNQIRKREDLPDQVFKTEIGKWKAVARETAQIHRAGRPVLVGTTSVEKSELLSSLLAEEKIPHNLLNAKPENVEREAEIVAQAGRAGAVTIATNMAGRGTDIILGGNSDYMARLKLKEILIPLLVKPNNEHKPPIPKQRSSKSKGGFSSKVGSNLTKNIPDYSTSLFPCKLDEEIQKKLSVLSDELVKNWGDRQLSVLDLDDRIATAAEKAPTEDKMIKLLRESLSRVKDEYEKVLTHEEKKVREVGGLHVIGTERHESRRVDNQLRGRAGRQGDFGSTRFFLSLEDNLLRIFGGERVANLMNAFRVDEDMPIESGMLTRSLESAQKKVETYYYDIRKQVFEYDEVMNNQRKAVYSERLRVLQGTDLKRQVIGYGERTMYEIVEAYINPDLPPEEWDIAQLISKVKEFIYLLDDLKADDVKLLSIEELKNYLQEQLRTAYDLKESQIEQIRPGLMREAERFFILQQIDNLWREHLQSMDSLRESVGLRGYGQKDPLIEYKNEGYDMFLEMMTNMRRNVIYSMFMFQPKTDKDDKN.

ATP contacts are provided by residues glutamine 90, 108–112 (GEGKT), and aspartate 509. The tract at residues 535 to 560 (PNNEHKPPIPKQRSSKSKGGFSSKVG) is disordered. The segment covering 551 to 560 (SKGGFSSKVG) has biased composition (low complexity).

The protein belongs to the SecA family. Monomer and homodimer. Part of the essential Sec protein translocation apparatus which comprises SecA, SecYEG and auxiliary proteins SecDF. Other proteins may also be involved.

The protein localises to the cell inner membrane. It localises to the cellular thylakoid membrane. Its subcellular location is the cytoplasm. It catalyses the reaction ATP + H2O + cellular proteinSide 1 = ADP + phosphate + cellular proteinSide 2.. Functionally, part of the Sec protein translocase complex. Interacts with the SecYEG preprotein conducting channel. Has a central role in coupling the hydrolysis of ATP to the transfer of proteins into and across the cell membrane, serving as an ATP-driven molecular motor driving the stepwise translocation of polypeptide chains across the membrane. Its function is as follows. Probably participates in protein translocation into and across both the cytoplasmic and thylakoid membranes in cyanobacterial cells. The chain is Protein translocase subunit SecA from Prochlorococcus marinus (strain MIT 9312).